A 302-amino-acid polypeptide reads, in one-letter code: Ribonucleoside-diphosphate reductase small subunit (302 aa).

Residues glutamate 61, glutamate 91, and histidine 94 each coordinate Fe cation. The active site involves tyrosine 98. The helical transmembrane segment at isoleucine 147 to leucine 167 threads the bilayer. Residues glutamate 154, glutamate 188, and histidine 191 each coordinate Fe cation.

The protein belongs to the ribonucleoside diphosphate reductase small chain family. In terms of assembly, heterotetramer composed of a homodimer of the large subunit (R1) and a homodimer of the small subunit (R2). Larger multisubunit protein complex are also active, composed of (R1)n(R2)n. Fe cation serves as cofactor.

The protein localises to the host membrane. It catalyses the reaction a 2'-deoxyribonucleoside 5'-diphosphate + [thioredoxin]-disulfide + H2O = a ribonucleoside 5'-diphosphate + [thioredoxin]-dithiol. Ribonucleoside-diphosphate reductase holoenzyme provides the precursors necessary for viral DNA synthesis. Allows virus growth in non-dividing cells, as well as reactivation from latency in infected hosts. Catalyzes the biosynthesis of deoxyribonucleotides from the corresponding ribonucleotides. This Homo sapiens (Human) protein is Ribonucleoside-diphosphate reductase small subunit.